A 268-amino-acid polypeptide reads, in one-letter code: Energy-coupling factor transporter transmembrane protein EcfT (268 aa).

Transmembrane regions (helical) follow at residues Ile26–Gly46, Ile47–Leu67, Leu73–Leu93, Leu116–Thr136, Val151–Leu171, and Ala246–Ile266.

It belongs to the energy-coupling factor EcfT family. Forms a stable energy-coupling factor (ECF) transporter complex composed of 2 membrane-embedded substrate-binding proteins (S component), 2 ATP-binding proteins (A component) and 2 transmembrane proteins (T component). May be able to interact with more than 1 S component at a time.

It is found in the cell membrane. Functionally, transmembrane (T) component of an energy-coupling factor (ECF) ABC-transporter complex. Unlike classic ABC transporters this ECF transporter provides the energy necessary to transport a number of different substrates. The chain is Energy-coupling factor transporter transmembrane protein EcfT from Acidaminococcus fermentans (strain ATCC 25085 / DSM 20731 / CCUG 9996 / CIP 106432 / VR4).